A 99-amino-acid chain; its full sequence is Small ribosomal subunit protein uS14c (99 aa).

The segment at 46–66 is disordered; that stretch reads LQSSPRNSAPTRLHRRCSSTG.

It belongs to the universal ribosomal protein uS14 family. As to quaternary structure, part of the 30S ribosomal subunit.

It is found in the plastid. The protein resides in the chloroplast. Binds 16S rRNA, required for the assembly of 30S particles. This is Small ribosomal subunit protein uS14c from Pinus thunbergii (Japanese black pine).